A 346-amino-acid polypeptide reads, in one-letter code: fMet-Leu-Phe receptor (346 aa).

Asparagine 1 and asparagine 7 each carry an N-linked (GlcNAc...) asparagine glycan. Over 1 to 24 (NSSLPTNISGGTPAVSAGYLFLDI) the chain is Extracellular. Residues 25–47 (ITYLVFAVTFVLGVLGNGLVIWV) traverse the membrane as a helical segment. Residues 48–58 (AGFRMRHTVTT) lie on the Cytoplasmic side of the membrane. A helical membrane pass occupies residues 59–80 (ISYLNLAVADFCFTSTLPFLMV). The Extracellular segment spans residues 81 to 97 (VKVMRGHWPFGWFLCKF). Cysteine 95 and cysteine 173 are disulfide-bonded. The chain crosses the membrane as a helical span at residues 98 to 118 (IFTIVDINLFGSVFLIALIAL). Over 119 to 137 (DRCVCVLHPVWTQNHRTVS) the chain is Cytoplasmic. The helical transmembrane segment at 138–159 (LAKKVIIGPWVMALLLTLPVII) threads the bilayer. Residues 160–202 (RVTTVPGKTGTVACTFDFSPWTNDPVEKLKVTIAMLTVRGIIR) lie on the Extracellular side of the membrane. The helical transmembrane segment at 203-223 (FIIGFSVPMSIVAVSYGLIAT) threads the bilayer. At 224-239 (KIHKQGLIKSSRPLRV) the chain is on the cytoplasmic side. The helical transmembrane segment at 240–263 (LSFVVAAFFLCWSPYQVVAFIATV) threads the bilayer. Residues 264–282 (RLRNILQGLSKELRIAVDA) are Extracellular-facing. Residues 283-302 (TSALAFFNSCLNPMLYVFMG) traverse the membrane as a helical segment. Residues 303–346 (QDFRERLIHSLPTSLERALTEDSAQTSDTATNSTLPSAEVPLQA) lie on the Cytoplasmic side of the membrane. The disordered stretch occupies residues 321–346 (LTEDSAQTSDTATNSTLPSAEVPLQA). Residues 324-338 (DSAQTSDTATNSTLP) are compositionally biased toward polar residues.

The protein belongs to the G-protein coupled receptor 1 family. In terms of processing, phosphorylated; which is necessary for desensitization.

The protein resides in the cell membrane. High affinity receptor for N-formyl-methionyl peptides (fMLP), which are powerful neutrophil chemotactic factors. Binding of fMLP to the receptor stimulates intracellular calcium mobilization and superoxide anion release. This response is mediated via a G-protein that activates a phosphatidylinositol-calcium second messenger system. Receptor for TAFA4, mediates its effects on chemoattracting macrophages, promoting phagocytosis and increasing ROS release. Receptor for cathepsin CTSG, leading to increased phagocyte chemotaxis. The chain is fMet-Leu-Phe receptor (FPR1) from Macaca mulatta (Rhesus macaque).